The following is a 611-amino-acid chain: MNKLIQSKLELLPTSPGCYIHKDKNDTIIYVGKAKNLRNRVRSYFRGSHDTKTEALVSEIEDFEFIVTESNIEALLLEINLIKENQPKYNIMLKDDKSYPFIKITNETYPRLIITRQVKKDVGLYFGPYPDVGAANEIKRLLDRLFPFRKCTNPPEKVCFYYHLGQCKAHTICKVDSQYFKELAQEVAAFLKGQDDQIIEDLRGKMAGAAQAMEFEKAAEYRDLIQSIGTLRTKQRVMAKDLQNRDVFGYYVDKGWMCVQVFFVRQGKLIERDVNLFPYYNDPDEDFLTYIGQFYQEKSHLKPNEILIPADIDEEAVRAMVDTKVLKPQRGEKKQLVNLAIKNARVSLQQKFDLLEKSIEKTQGAIENLGQLLNIPTPVRIESFDNSNIMGTSPVSAMVVFVNGKPSKKDYRKYKIKTVVGPDDYASMREVIKRRYSRVIRDGLTPPDLIVIDGGQGQVNIAKEVIQEQLGLDIPIAGLQKNDKHQTHELLFGDPLQVVELSRNSQEFFLLQRIQDEVHRFAITFHRQLRSKNSFSSQLDGIEGLGPKRKQNLMKHFKSLTKIKEASVDQIVEVGVPRAVAEAVREKLNPKTQEQEQAQLREVAEPQIGLE.

The region spanning 14–91 (TSPGCYIHKD…IKENQPKYNI (78 aa)) is the GIY-YIG domain. Positions 196–231 (DQIIEDLRGKMAGAAQAMEFEKAAEYRDLIQSIGTL) constitute a UVR domain. The segment at 587–611 (KLNPKTQEQEQAQLREVAEPQIGLE) is disordered.

Belongs to the UvrC family. In terms of assembly, interacts with UvrB in an incision complex.

It localises to the cytoplasm. Its function is as follows. The UvrABC repair system catalyzes the recognition and processing of DNA lesions. UvrC both incises the 5' and 3' sides of the lesion. The N-terminal half is responsible for the 3' incision and the C-terminal half is responsible for the 5' incision. This is UvrABC system protein C from Streptococcus sanguinis (strain SK36).